A 126-amino-acid polypeptide reads, in one-letter code: MFKFVMILAVVGVATALAPVSRSDDVHADVLSRSDDVRADGFDSSLHTSNGIEQAASGDAHGNIHGNFGWISPEGEHVEVKYVANENGYQPSGAWIPTPPPIPEAIARAVAWLESHPPAPEHPRHH.

An N-terminal signal peptide occupies residues 1–16 (MFKFVMILAVVGVATA). The 62-residue stretch at 39–100 (ADGFDSSLHT…PSGAWIPTPP (62 aa)) folds into the Chitin-binding type R&amp;R domain.

Functionally, component of the larval cuticle. This is Larval cuticle protein 2 (Lcp2) from Drosophila melanogaster (Fruit fly).